A 1755-amino-acid chain; its full sequence is Transposon Ty1-OR Gag-Pol polyprotein (1755 aa).

3 stretches are compositionally biased toward polar residues: residues 1-10, 48-60, and 127-152; these read MESQQLSNYP, TKAN…TPAS, and QSQF…GNTF. Disordered stretches follow at residues 1 to 93, 126 to 173, and 352 to 421; these read MESQ…MMTQ, PQSQ…RPPP, and GSRN…SKST. Positions 153–165 are enriched in low complexity; sequence TDSSSADSDMTST. Positions 299 to 401 are RNA-binding; sequence NNGIHINNKV…NSKSKTARAH (103 aa). Over residues 402-418 the composition is skewed to low complexity; that stretch reads NVSTSNNSPSTDNDSIS. Ser-416 is subject to Phosphoserine. Asp-461 acts as the For protease activity; shared with dimeric partner in catalysis. Positions 583 to 640 are integrase-type zinc finger-like; that stretch reads NVHTSESTRKYPYPFIHRMLAHANAQTIRYSLKNNTITYFNESDVDWSSAIDYQCPDC. The region spanning 660–835 is the Integrase catalytic domain; sequence NSYEPFQYLH…AGLDISTLLP (176 aa). Mg(2+)-binding residues include Asp-671 and Asp-736. 3 disordered regions span residues 956-1087, 1092-1111, and 1130-1187; these read SKAV…ETEK, RSPS…NIVP, and DLPL…DNET. Residues 960–969 are compositionally biased toward low complexity; it reads SPTDSTPPST. Positions 1005 to 1015 are enriched in polar residues; that stretch reads STPQISNIEST. A compositionally biased stretch (basic and acidic residues) spans 1038–1053; that stretch reads ESSHASKSKDFRHSDS. 2 stretches are compositionally biased toward polar residues: residues 1054 to 1082 and 1101 to 1111; these read YSEN…QISD and PENNSSHNIVP. The Bipartite nuclear localization signal motif lies at 1178–1212; it reads KKRSLEDNETEIKVSRDTWNTKNMRSLEPPRSKKR. The 139-residue stretch at 1338–1476 folds into the Reverse transcriptase Ty1/copia-type domain; that stretch reads NNYYITQLDI…DILGLEIKYQ (139 aa). Mg(2+) is bound by residues Asp-1346, Asp-1427, Asp-1428, Asp-1610, Glu-1652, and Asp-1685. The RNase H Ty1/copia-type domain maps to 1610-1752; it reads DASYGNQPYY…IKTFKLLTNK (143 aa).

As to quaternary structure, the capsid protein forms a homotrimer, from which the VLPs are assembled. The protease is a homodimer, whose active site consists of two apposed aspartic acid residues. Initially, virus-like particles (VLPs) are composed of the structural unprocessed proteins Gag and Gag-Pol, and also contain the host initiator methionine tRNA (tRNA(i)-Met) which serves as a primer for minus-strand DNA synthesis, and a dimer of genomic Ty RNA. Processing of the polyproteins occurs within the particle and proceeds by an ordered pathway, called maturation. First, the protease (PR) is released by autocatalytic cleavage of the Gag-Pol polyprotein yielding capsid protein p45 and a Pol-p154 precursor protein. This cleavage is a prerequisite for subsequent processing of Pol-p154 at the remaining sites to release the mature structural and catalytic proteins. Maturation takes place prior to the RT reaction and is required to produce transposition-competent VLPs.

It localises to the cytoplasm. It is found in the nucleus. It carries out the reaction DNA(n) + a 2'-deoxyribonucleoside 5'-triphosphate = DNA(n+1) + diphosphate. The enzyme catalyses Endonucleolytic cleavage to 5'-phosphomonoester.. Functionally, capsid protein (CA) is the structural component of the virus-like particle (VLP), forming the shell that encapsulates the retrotransposons dimeric RNA genome. The particles are assembled from trimer-clustered units and there are holes in the capsid shells that allow for the diffusion of macromolecules. CA also has nucleocapsid-like chaperone activity, promoting primer tRNA(i)-Met annealing to the multipartite primer-binding site (PBS), dimerization of Ty1 RNA and initiation of reverse transcription. In terms of biological role, the aspartyl protease (PR) mediates the proteolytic cleavages of the Gag and Gag-Pol polyproteins after assembly of the VLP. Its function is as follows. Reverse transcriptase/ribonuclease H (RT) is a multifunctional enzyme that catalyzes the conversion of the retro-elements RNA genome into dsDNA within the VLP. The enzyme displays a DNA polymerase activity that can copy either DNA or RNA templates, and a ribonuclease H (RNase H) activity that cleaves the RNA strand of RNA-DNA heteroduplexes during plus-strand synthesis and hydrolyzes RNA primers. The conversion leads to a linear dsDNA copy of the retrotransposon that includes long terminal repeats (LTRs) at both ends. Integrase (IN) targets the VLP to the nucleus, where a subparticle preintegration complex (PIC) containing at least integrase and the newly synthesized dsDNA copy of the retrotransposon must transit the nuclear membrane. Once in the nucleus, integrase performs the integration of the dsDNA into the host genome. The protein is Transposon Ty1-OR Gag-Pol polyprotein (TY1B-OR) of Saccharomyces cerevisiae (strain ATCC 204508 / S288c) (Baker's yeast).